Consider the following 197-residue polypeptide: MVFEYPKGVELIAGVDEVGRGPLVGAVVTAAVILDPHQPILGLNDSKKLSEKKRLLLAEEIKQKALAWSLGRAEAEEIDQLNILHATMLAMKRAVENLKIQPHFVLVDGNRVPELMIPAQAIVKGDGLVAEISAASILAKVARDQEMAELDKRYPEYAFAQHKGYPTALHLAKLAELGPLAQHRRSFAPVRKLLNTL.

Positions 10-197 (ELIAGVDEVG…APVRKLLNTL (188 aa)) constitute an RNase H type-2 domain. Residues Asp16, Glu17, and Asp108 each coordinate a divalent metal cation.

It belongs to the RNase HII family. It depends on Mn(2+) as a cofactor. Requires Mg(2+) as cofactor.

It localises to the cytoplasm. The catalysed reaction is Endonucleolytic cleavage to 5'-phosphomonoester.. Its function is as follows. Endonuclease that specifically degrades the RNA of RNA-DNA hybrids. This chain is Ribonuclease HII (rnhB), found in Pasteurella multocida (strain Pm70).